The chain runs to 232 residues: 2,3-bisphosphoglycerate-dependent phosphoglycerate mutase (232 aa).

Residues 10 to 17, 23 to 24, Arg-62, 89 to 92, Lys-100, 116 to 117, and 185 to 186 contribute to the substrate site; these read RHGESIWN, TG, ERHY, RR, and GN. Residue His-11 is the Tele-phosphohistidine intermediate of the active site. Glu-89 (proton donor/acceptor) is an active-site residue.

Belongs to the phosphoglycerate mutase family. BPG-dependent PGAM subfamily. Homodimer.

It carries out the reaction (2R)-2-phosphoglycerate = (2R)-3-phosphoglycerate. Its pathway is carbohydrate degradation; glycolysis; pyruvate from D-glyceraldehyde 3-phosphate: step 3/5. In terms of biological role, catalyzes the interconversion of 2-phosphoglycerate and 3-phosphoglycerate. The polypeptide is 2,3-bisphosphoglycerate-dependent phosphoglycerate mutase (Buchnera aphidicola subsp. Baizongia pistaciae (strain Bp)).